A 114-amino-acid polypeptide reads, in one-letter code: T cell receptor beta variable 6-2 (114 aa).

The signal sequence occupies residues M1 to A21. Residues G22–Y114 enclose the Ig-like domain. The cysteines at positions 42 and 110 are disulfide-linked. N84 is a glycosylation site (N-linked (GlcNAc...) asparagine).

As to quaternary structure, alpha-beta TR is a heterodimer composed of an alpha and beta chain; disulfide-linked. The alpha-beta TR is associated with the transmembrane signaling CD3 coreceptor proteins to form the TR-CD3 (TcR or TCR). The assembly of alpha-beta TR heterodimers with CD3 occurs in the endoplasmic reticulum where a single alpha-beta TR heterodimer associates with one CD3D-CD3E heterodimer, one CD3G-CD3E heterodimer and one CD247 homodimer forming a stable octameric structure. CD3D-CD3E and CD3G-CD3E heterodimers preferentially associate with TR alpha and TR beta chains, respectively. The association of the CD247 homodimer is the last step of TcR assembly in the endoplasmic reticulum and is required for transport to the cell surface.

It is found in the cell membrane. Functionally, v region of the variable domain of T cell receptor (TR) beta chain that participates in the antigen recognition. Alpha-beta T cell receptors are antigen specific receptors which are essential to the immune response and are present on the cell surface of T lymphocytes. Recognize peptide-major histocompatibility (MH) (pMH) complexes that are displayed by antigen presenting cells (APC), a prerequisite for efficient T cell adaptive immunity against pathogens. Binding of alpha-beta TR to pMH complex initiates TR-CD3 clustering on the cell surface and intracellular activation of LCK that phosphorylates the ITAM motifs of CD3G, CD3D, CD3E and CD247 enabling the recruitment of ZAP70. In turn ZAP70 phosphorylates LAT, which recruits numerous signaling molecules to form the LAT signalosome. The LAT signalosome propagates signal branching to three major signaling pathways, the calcium, the mitogen-activated protein kinase (MAPK) kinase and the nuclear factor NF-kappa-B (NF-kB) pathways, leading to the mobilization of transcription factors that are critical for gene expression and essential for T cell growth and differentiation. The T cell repertoire is generated in the thymus, by V-(D)-J rearrangement. This repertoire is then shaped by intrathymic selection events to generate a peripheral T cell pool of self-MH restricted, non-autoaggressive T cells. Post-thymic interaction of alpha-beta TR with the pMH complexes shapes TR structural and functional avidity. This Homo sapiens (Human) protein is T cell receptor beta variable 6-2.